A 456-amino-acid chain; its full sequence is Tyrosinase-like protein (456 aa).

Residues 1–22 (MNTMTLLGKVFLLQFLIGVGFC) form the signal peptide. Positions 145, 154, 163, 295, 299, and 322 each coordinate Cu cation.

This sequence belongs to the tyrosinase family. Cu(2+) serves as cofactor. Prismatic layer of shell (at protein level).

It is found in the secreted. The protein is Tyrosinase-like protein of Pinctada maxima (Silver-lipped pearl oyster).